The primary structure comprises 487 residues: uncharacterized protein (487 aa).

The tract at residues 84-125 (DDDENDNENDNENDVENENDVENENDDENENDDDDDENDDDD) is disordered. A coiled-coil region spans residues 410–485 (IKEISDKLKC…KLEKNIKKSG (76 aa)).

This sequence belongs to the mimivirus L5 family.

This is an uncharacterized protein from Acanthamoeba polyphaga (Amoeba).